The primary structure comprises 252 residues: Small ribosomal subunit protein uS3 (252 aa).

The 71-residue stretch at 39-109 (IRNYVQTRLK…EVKIDVVEVV (71 aa)) folds into the KH type-2 domain. Over residues 221–241 (EMKRIKERRSDSGPRSRNDRS) the composition is skewed to basic and acidic residues. The interval 221-252 (EMKRIKERRSDSGPRSRNDRSQKRRRRPNDRG) is disordered. Residues 242-252 (QKRRRRPNDRG) are compositionally biased toward basic residues.

This sequence belongs to the universal ribosomal protein uS3 family. In terms of assembly, part of the 30S ribosomal subunit. Forms a tight complex with proteins S10 and S14.

Its function is as follows. Binds the lower part of the 30S subunit head. Binds mRNA in the 70S ribosome, positioning it for translation. This Chlorobium luteolum (strain DSM 273 / BCRC 81028 / 2530) (Pelodictyon luteolum) protein is Small ribosomal subunit protein uS3.